A 233-amino-acid chain; its full sequence is Membrane glycoprotein UL9 (233 aa).

An N-terminal signal peptide occupies residues 1 to 20 (MSKRLQVFPWITILFYTSKS). N-linked (GlcNAc...) asparagine; by host glycosylation is found at Asn-40, Asn-94, Asn-101, Asn-131, and Asn-169. A helical membrane pass occupies residues 194 to 214 (MWIIPLVIVITIIVLICFKFP).

Belongs to the HHV-5 UL9 family.

It localises to the host membrane. The protein is Membrane glycoprotein UL9 (UL9) of Homo sapiens (Human).